A 511-amino-acid polypeptide reads, in one-letter code: Cytochrome P450 76C4 (511 aa).

Residues 3–23 (IISGQALFLLFCFISSCFLIS) form a helical membrane-spanning segment. Residue Cys450 participates in heme binding.

This sequence belongs to the cytochrome P450 family. Heme is required as a cofactor.

Its subcellular location is the membrane. This chain is Cytochrome P450 76C4 (CYP76C4), found in Arabidopsis thaliana (Mouse-ear cress).